The sequence spans 464 residues: Cysteine--tRNA ligase (464 aa).

C29 is a Zn(2+) binding site. The short motif at 31-41 (ATVQGVPHIGH) is the 'HIGH' region element. The tract at residues 160–180 (RLDEVQQGESTASGKRDPRDF) is disordered. C208, H233, and E237 together coordinate Zn(2+). Positions 264–268 (KMSKS) match the 'KMSKS' region motif. ATP is bound at residue K267.

It belongs to the class-I aminoacyl-tRNA synthetase family. Monomer. Zn(2+) is required as a cofactor.

It localises to the cytoplasm. The catalysed reaction is tRNA(Cys) + L-cysteine + ATP = L-cysteinyl-tRNA(Cys) + AMP + diphosphate. This is Cysteine--tRNA ligase from Saccharopolyspora erythraea (strain ATCC 11635 / DSM 40517 / JCM 4748 / NBRC 13426 / NCIMB 8594 / NRRL 2338).